Reading from the N-terminus, the 217-residue chain is MNYPHPLIAREGWPFLAGAFIVSVLVHISAGFWGALPLWIVTLFVLQFFRDPPRPIPSAPNAILAPADGRIVVVEKTQDPYAGREALKISVFMNVFNVHSNRSSLDGKVEKLEYFPGKFVNADLDKASMENERNAVVIRRASDGQVVTLVQVAGLVARRILCYINVGDMLSRGQRYGFIRFGSRVDVYLPTDARPRVTIGEKVSASATVLADLDVRA.

The Schiff-base intermediate with substrate; via pyruvic acid role is filled by S183. S183 is subject to Pyruvic acid (Ser); by autocatalysis.

This sequence belongs to the phosphatidylserine decarboxylase family. PSD-A subfamily. As to quaternary structure, heterodimer of a large membrane-associated beta subunit and a small pyruvoyl-containing alpha subunit. Pyruvate is required as a cofactor. Is synthesized initially as an inactive proenzyme. Formation of the active enzyme involves a self-maturation process in which the active site pyruvoyl group is generated from an internal serine residue via an autocatalytic post-translational modification. Two non-identical subunits are generated from the proenzyme in this reaction, and the pyruvate is formed at the N-terminus of the alpha chain, which is derived from the carboxyl end of the proenzyme. The post-translation cleavage follows an unusual pathway, termed non-hydrolytic serinolysis, in which the side chain hydroxyl group of the serine supplies its oxygen atom to form the C-terminus of the beta chain, while the remainder of the serine residue undergoes an oxidative deamination to produce ammonia and the pyruvoyl prosthetic group on the alpha chain.

It localises to the cell membrane. It catalyses the reaction a 1,2-diacyl-sn-glycero-3-phospho-L-serine + H(+) = a 1,2-diacyl-sn-glycero-3-phosphoethanolamine + CO2. It participates in phospholipid metabolism; phosphatidylethanolamine biosynthesis; phosphatidylethanolamine from CDP-diacylglycerol: step 2/2. Catalyzes the formation of phosphatidylethanolamine (PtdEtn) from phosphatidylserine (PtdSer). In Cupriavidus metallidurans (strain ATCC 43123 / DSM 2839 / NBRC 102507 / CH34) (Ralstonia metallidurans), this protein is Phosphatidylserine decarboxylase proenzyme.